The sequence spans 272 residues: CD40 ligand (272 aa).

The Cytoplasmic segment spans residues 1-23 (MNEAYSPAAPRPMGSTSPSTMKM). Residues 24–44 (FMCFLSVFMVVQTIGTVLFCL) traverse the membrane as a helical; Signal-anchor for type II membrane protein segment. At 45 to 272 (YLHMKMDKME…GNTYFGMFKL (228 aa)) the chain is on the extracellular side. N124 and N146 each carry an N-linked (GlcNAc...) asparagine glycan. The THD domain maps to 136-272 (IATHLAGVKS…GNTYFGMFKL (137 aa)). A disulfide bond links C190 and C229. N251 is a glycosylation site (N-linked (GlcNAc...) asparagine).

The protein belongs to the tumor necrosis factor family. Homotrimer. Interacts with CD28. CD40 ligand, soluble form: Exists as either a monomer or a homotrimer. Forms a ternary complex between CD40 and integrins for CD40-CD40LG signaling. In terms of processing, the soluble form derives from the membrane form by proteolytic processing.

The protein resides in the cell membrane. It localises to the cell surface. The protein localises to the secreted. Functionally, cytokine that acts as a ligand to CD40/TNFRSF5. Costimulates T-cell proliferation and cytokine production. Induces the activation of NF-kappa-B. Mediates B-cell proliferation in the absence of co-stimulus as well as IgE production in the presence of IL4. Involved in immunoglobulin class switching. Acts as a ligand for integrins, specifically ITGA5:ITGB1 and ITGAV:ITGB3; both integrins and the CD40 receptor are required for activation of CD40-CD40LG signaling, which have cell-type dependent effects, such as B-cell activation, NF-kappa-B signaling and anti-apoptotic signaling. This is CD40 ligand (CD40LG) from Gallus gallus (Chicken).